We begin with the raw amino-acid sequence, 321 residues long: tRNA U34 carboxymethyltransferase (321 aa).

Carboxy-S-adenosyl-L-methionine is bound by residues Lys-90, Trp-104, Lys-109, Gly-129, 151-153 (DPT), 180-181 (IE), Met-195, Tyr-199, and Arg-314.

Belongs to the class I-like SAM-binding methyltransferase superfamily. CmoB family. As to quaternary structure, homotetramer.

The enzyme catalyses carboxy-S-adenosyl-L-methionine + 5-hydroxyuridine(34) in tRNA = 5-carboxymethoxyuridine(34) in tRNA + S-adenosyl-L-homocysteine + H(+). Functionally, catalyzes carboxymethyl transfer from carboxy-S-adenosyl-L-methionine (Cx-SAM) to 5-hydroxyuridine (ho5U) to form 5-carboxymethoxyuridine (cmo5U) at position 34 in tRNAs. This is tRNA U34 carboxymethyltransferase from Actinobacillus succinogenes (strain ATCC 55618 / DSM 22257 / CCUG 43843 / 130Z).